Consider the following 387-residue polypeptide: MANDFLFTSESVSEGHPDKVADQISDAVLDAILAQDKYARVAAETLCNTGLVVLAGEITTTANVDYIQVARDTIKRIGYDNTEYGIDYKGCAVLVAYDKQSPDIAQGVDRASDDYLNQGAGDQGLMFGYACDETPELMPFPIYYSHRLVERQSQLRRDGRLPWLRPDAKSQVTVRYVDGRPHSVDTVVLSTQHAPDITQAQIREAVIEEIIKPVLPPEMLKDTKYLVNPTGRFVIGGPQGDCGLTGRKIIVDTYGGASPHGGGAFSGKDPSKVDRSAAYAARYVAKNVVAAGLARQCQVQVSYAIGVARPINVTVYTEGTGKISDAKIAELVQEHFDLRPKGIVQMLDLLRPIYEKTAAYGHFGREEPEFSWEATDKAAILRAAAGL.

An ATP-binding site is contributed by His-16. Asp-18 is a binding site for Mg(2+). Glu-44 is a K(+) binding site. L-methionine is bound by residues Glu-57 and Gln-100. The tract at residues 100 to 110 (QSPDIAQGVDR) is flexible loop. ATP contacts are provided by residues 167–169 (DAK), 232–233 (RF), Asp-241, 247–248 (RK), Ala-264, and Lys-268. Asp-241 lines the L-methionine pocket. An L-methionine-binding site is contributed by Lys-272.

It belongs to the AdoMet synthase family. Homotetramer; dimer of dimers. Mg(2+) is required as a cofactor. K(+) serves as cofactor.

It is found in the cytoplasm. It carries out the reaction L-methionine + ATP + H2O = S-adenosyl-L-methionine + phosphate + diphosphate. It functions in the pathway amino-acid biosynthesis; S-adenosyl-L-methionine biosynthesis; S-adenosyl-L-methionine from L-methionine: step 1/1. Catalyzes the formation of S-adenosylmethionine (AdoMet) from methionine and ATP. The overall synthetic reaction is composed of two sequential steps, AdoMet formation and the subsequent tripolyphosphate hydrolysis which occurs prior to release of AdoMet from the enzyme. The chain is S-adenosylmethionine synthase from Cupriavidus pinatubonensis (strain JMP 134 / LMG 1197) (Cupriavidus necator (strain JMP 134)).